The following is a 464-amino-acid chain: Argininosuccinate lyase (464 aa).

This sequence belongs to the lyase 1 family. Argininosuccinate lyase subfamily.

It localises to the cytoplasm. The catalysed reaction is 2-(N(omega)-L-arginino)succinate = fumarate + L-arginine. The protein operates within amino-acid biosynthesis; L-arginine biosynthesis; L-arginine from L-ornithine and carbamoyl phosphate: step 3/3. The sequence is that of Argininosuccinate lyase from Janthinobacterium sp. (strain Marseille) (Minibacterium massiliensis).